A 494-amino-acid polypeptide reads, in one-letter code: Alpha-amylase-related protein (494 aa).

The first 20 residues, 1-20 (MIKFALALTLCLAGASLSLA), serve as a signal peptide directing secretion. Gln21 carries the pyrrolidone carboxylic acid modification. Cys48 and Cys104 are joined by a disulfide. Residues Asn118, Gln169, and Asp178 each contribute to the Ca(2+) site. Cys157 and Cys171 are joined by a disulfide. Position 206 (Arg206) interacts with chloride. The Nucleophile role is filled by Asp208. A Ca(2+)-binding site is contributed by His212. Glu245 functions as the Proton donor in the catalytic mechanism. Positions 308 and 343 each coordinate chloride. 3 disulfide bridges follow: Cys376–Cys382, Cys418–Cys441, and Cys448–Cys460.

The protein belongs to the glycosyl hydrolase 13 family. Monomer. Ca(2+) is required as a cofactor. It depends on chloride as a cofactor.

Its subcellular location is the secreted. It carries out the reaction Endohydrolysis of (1-&gt;4)-alpha-D-glucosidic linkages in polysaccharides containing three or more (1-&gt;4)-alpha-linked D-glucose units.. This Drosophila auraria (Fruit fly) protein is Alpha-amylase-related protein (Amyrel).